The primary structure comprises 242 residues: Transcriptional regulatory protein btr (242 aa).

Residues Met158 to Pro231 enclose the HTH crp-type domain. A DNA-binding region (H-T-H motif) is located at residues Arg191–Ser210.

Its function is as follows. May regulate gene expression in response to changes in oxygen levels or to changes in the redox potential of the bacterial environment. The polypeptide is Transcriptional regulatory protein btr (btr) (Bordetella pertussis (strain Tohama I / ATCC BAA-589 / NCTC 13251)).